The sequence spans 161 residues: SsrA-binding protein (161 aa).

The protein belongs to the SmpB family.

Its subcellular location is the cytoplasm. Required for rescue of stalled ribosomes mediated by trans-translation. Binds to transfer-messenger RNA (tmRNA), required for stable association of tmRNA with ribosomes. tmRNA and SmpB together mimic tRNA shape, replacing the anticodon stem-loop with SmpB. tmRNA is encoded by the ssrA gene; the 2 termini fold to resemble tRNA(Ala) and it encodes a 'tag peptide', a short internal open reading frame. During trans-translation Ala-aminoacylated tmRNA acts like a tRNA, entering the A-site of stalled ribosomes, displacing the stalled mRNA. The ribosome then switches to translate the ORF on the tmRNA; the nascent peptide is terminated with the 'tag peptide' encoded by the tmRNA and targeted for degradation. The ribosome is freed to recommence translation, which seems to be the essential function of trans-translation. This is SsrA-binding protein from Haemophilus influenzae (strain 86-028NP).